The following is a 308-amino-acid chain: MAVAMDNAILENILRQVRPLIGQGKVADYIPALATVDGSRLGIAICTVDGQLFQAGDAQERFSIQSISKVLSLVVAMRHYSEEEIWQRVGKDPSGSPFNSLVQLEMEQGIPRNPFINAGALVVCDMLQGRLSAPRQRMLEVVRGLSGVSDISYDTVVARSEFEHSARNAAIAWLMKSFGNFHHDVTTVLQNYFHYCALKMSCVELARTFVFLANQGKAIHIDEPVVTPMQARQINALMATSGIYQNAGEFAWRVGLPAKSGVGGGIVAIVPHEMAIAVWSPELDDAGNSLAGIAVLEQLTKQLGRSVY.

Residues S66, N117, E161, N168, Y192, Y244, and V262 each coordinate substrate.

The protein belongs to the glutaminase family. Homotetramer.

The catalysed reaction is L-glutamine + H2O = L-glutamate + NH4(+). This chain is Glutaminase, found in Shigella dysenteriae serotype 1 (strain Sd197).